Reading from the N-terminus, the 224-residue chain is Probable GTP-binding protein EngB (224 aa).

The EngB-type G domain occupies serine 27–glutamine 201. GTP contacts are provided by residues glycine 35–serine 42, glycine 62–leucine 66, aspartate 80–glycine 83, threonine 147–aspartate 150, and phenylalanine 180–serine 182. Mg(2+) contacts are provided by serine 42 and threonine 64. The interval glutamate 205–glutamate 224 is disordered.

Belongs to the TRAFAC class TrmE-Era-EngA-EngB-Septin-like GTPase superfamily. EngB GTPase family. The cofactor is Mg(2+).

In terms of biological role, necessary for normal cell division and for the maintenance of normal septation. The sequence is that of Probable GTP-binding protein EngB from Colwellia psychrerythraea (strain 34H / ATCC BAA-681) (Vibrio psychroerythus).